Reading from the N-terminus, the 880-residue chain is Alanine--tRNA ligase (880 aa).

His563, His567, Cys673, and His677 together coordinate Zn(2+).

It belongs to the class-II aminoacyl-tRNA synthetase family. Requires Zn(2+) as cofactor.

It is found in the cytoplasm. It catalyses the reaction tRNA(Ala) + L-alanine + ATP = L-alanyl-tRNA(Ala) + AMP + diphosphate. Its function is as follows. Catalyzes the attachment of alanine to tRNA(Ala) in a two-step reaction: alanine is first activated by ATP to form Ala-AMP and then transferred to the acceptor end of tRNA(Ala). Also edits incorrectly charged Ser-tRNA(Ala) and Gly-tRNA(Ala) via its editing domain. The protein is Alanine--tRNA ligase of Caulobacter vibrioides (strain ATCC 19089 / CIP 103742 / CB 15) (Caulobacter crescentus).